Here is a 1225-residue protein sequence, read N- to C-terminus: DNA-directed RNA polymerase subunit beta' (1225 aa).

Residues Cys-60, Cys-62, Cys-75, and Cys-78 each coordinate Zn(2+). Mg(2+) is bound by residues Asp-450, Asp-452, and Asp-454. Zn(2+) contacts are provided by Cys-818, Cys-892, Cys-899, and Cys-902.

It belongs to the RNA polymerase beta' chain family. In terms of assembly, the RNAP catalytic core consists of 2 alpha, 1 beta, 1 beta' and 1 omega subunit. When a sigma factor is associated with the core the holoenzyme is formed, which can initiate transcription. Requires Mg(2+) as cofactor. Zn(2+) is required as a cofactor.

It carries out the reaction RNA(n) + a ribonucleoside 5'-triphosphate = RNA(n+1) + diphosphate. Its function is as follows. DNA-dependent RNA polymerase catalyzes the transcription of DNA into RNA using the four ribonucleoside triphosphates as substrates. This is DNA-directed RNA polymerase subunit beta' from Streptococcus pneumoniae (strain P1031).